Reading from the N-terminus, the 856-residue chain is DNA mismatch repair protein MutS (856 aa).

611–618 (GPNMGGKS) lines the ATP pocket.

It belongs to the DNA mismatch repair MutS family.

This protein is involved in the repair of mismatches in DNA. It is possible that it carries out the mismatch recognition step. This protein has a weak ATPase activity. The chain is DNA mismatch repair protein MutS from Histophilus somni (strain 129Pt) (Haemophilus somnus).